Here is a 521-residue protein sequence, read N- to C-terminus: Lysine--tRNA ligase (521 aa).

A 'HIGH' region motif is present at residues 32–40; that stretch reads PSGTVHIGN. The 'KMSKS' region signature appears at 280–284; the sequence is KISSS.

Belongs to the class-I aminoacyl-tRNA synthetase family.

It localises to the cytoplasm. The enzyme catalyses tRNA(Lys) + L-lysine + ATP = L-lysyl-tRNA(Lys) + AMP + diphosphate. In Borrelia garinii subsp. bavariensis (strain ATCC BAA-2496 / DSM 23469 / PBi) (Borreliella bavariensis), this protein is Lysine--tRNA ligase.